A 197-amino-acid chain; its full sequence is Imidazoleglycerol-phosphate dehydratase (197 aa).

This sequence belongs to the imidazoleglycerol-phosphate dehydratase family.

It localises to the cytoplasm. The catalysed reaction is D-erythro-1-(imidazol-4-yl)glycerol 3-phosphate = 3-(imidazol-4-yl)-2-oxopropyl phosphate + H2O. It participates in amino-acid biosynthesis; L-histidine biosynthesis; L-histidine from 5-phospho-alpha-D-ribose 1-diphosphate: step 6/9. This chain is Imidazoleglycerol-phosphate dehydratase, found in Pseudomonas entomophila (strain L48).